The primary structure comprises 775 residues: MVRATCSCVMSVNPLSAQTSASPLSRNRSSLLSKFRTQLGQRNRAITDFYIEPDDPWRSYFPGDVIKGTVSLTVVRPVRITHLVISLHGIVKVFKNNVPAGETPPDVGSLGPGRGRRGAEYLGNGVATLFEDEVVLCGEGRLKEGIYKFRFEMSFPPYPLPSSISFERGTISYMLTSTLTKPTTMNPTLSCRRRINLLENIDIAAFPAPKPRVVTLEPISKRSKPKGKTKAAGFDAPDTASLEPSASGGITVPEHRPPLSPAPSNVSSSSRLSNSSQSFQIVTDPGSTASSGVRNSEARSNTPSVTDGIITAKAEVLRAGVLPGDTLPIKITINHTKQVRSAHGIIITLYRSGRIDLHPAIPMGSTANGKKPIYEDYYPRSRTGLGGLTLGTSRASSVFRKDLSQTFAPLIVDPTTLTADIKTSIRIPEDAFPTITRTPGSMINFRYYVEVVVDLRGKLTSPERFLPRFNLVSSGRNFSSNGKIVHPADTNGSAITANWGDNILDTDQIRREKGVVAVIFEVVIGTQDTQRRKSEARRMSSTAEEAEFQQPVENSVDGDYAGHDYQGSMAGPEPGYAPLENTAYGPDQIRWPDYPEQSEHEHYPFQPGTLPSPQPDEPMDEKARLRRAEQTLLPSQPPCDPEAGPSSAVEAAMPTAPVLPEDDHLNDYHHLPSTTVNGMTGMAPALMSAESVQTVIAGSSSAPLTSPSRPSEEDKQELERQRLMMEASAPGDPDARHNDRADDGPSAPIFHDDDDDQQLVGGAANGDELLPRYQR.

Disordered regions lie at residues 217–304 (EPIS…NTPS), 531–550 (RRKS…EFQQ), 586–623 (PDQI…DEKA), 631–650 (TLLP…SAVE), and 697–775 (AGSS…RYQR). Residues 262–278 (APSNVSSSSRLSNSSQS) are compositionally biased toward low complexity. The segment covering 279–304 (FQIVTDPGSTASSGVRNSEARSNTPS) has biased composition (polar residues). The span at 697–709 (AGSSSAPLTSPSR) shows a compositional bias: polar residues. 2 stretches are compositionally biased toward basic and acidic residues: residues 710–723 (PSEE…RQRL) and 733–743 (PDARHNDRADD).

It belongs to the arrestin family. PalF/RIM8 subfamily.

Its function is as follows. Required for the proteolytic cleavage of the transcription factor pacC in response to alkaline ambient pH. This chain is pH-response regulator protein palF/RIM8 (palF), found in Emericella nidulans (strain FGSC A4 / ATCC 38163 / CBS 112.46 / NRRL 194 / M139) (Aspergillus nidulans).